Consider the following 442-residue polypeptide: Cytochrome c biogenesis CcmF C-terminal-like mitochondrial protein (442 aa).

3 helical membrane-spanning segments follow: residues 6–26, 39–59, and 122–142; these read NFFFFIIFMVVLCGTAAPVLL, PFFNGTIIPILISLFSLLVYL, and YLESFCGVLCLLFFCTFFFLA. Residues 151-175 form a disordered region; sequence RARRRKGQTLRPNGNEQRRNDKMRC. Basic and acidic residues predominate over residues 166–175; that stretch reads EQRRNDKMRC. The chain crosses the membrane as a helical span at residues 411-431; it reads FIFFIWIGFMLASLGGLPSLL.

This sequence belongs to the CcmF/CycK/Ccl1/NrfE/CcsA family. Interacts with CCMFN2.

The protein localises to the mitochondrion inner membrane. Its function is as follows. Forms a complex with CCMFN1, CCMFN2 and CCMH that performs the assembly of heme with c-type apocytochromes in mitochondria. The chain is Cytochrome c biogenesis CcmF C-terminal-like mitochondrial protein (CCMFC) from Arabidopsis thaliana (Mouse-ear cress).